The sequence spans 234 residues: Adenosine 5'-phosphosulfate reductase (234 aa).

[4Fe-4S] cluster-binding residues include cysteine 120, cysteine 121, cysteine 203, and cysteine 206. Cysteine 229 functions as the Nucleophile; cysteine thiosulfonate intermediate in the catalytic mechanism.

Belongs to the PAPS reductase family. CysH subfamily. [4Fe-4S] cluster serves as cofactor.

The protein resides in the cytoplasm. The enzyme catalyses [thioredoxin]-disulfide + sulfite + AMP + 2 H(+) = adenosine 5'-phosphosulfate + [thioredoxin]-dithiol. Its pathway is sulfur metabolism; hydrogen sulfide biosynthesis; sulfite from sulfate. Its function is as follows. Catalyzes the formation of sulfite from adenosine 5'-phosphosulfate (APS) using thioredoxin as an electron donor. This chain is Adenosine 5'-phosphosulfate reductase, found in Bacillus cereus (strain B4264).